A 382-amino-acid chain; its full sequence is MVSKPHGGKLVERVAKGKTRERLVEEAKEMVNVQVDEGLAADVANVAHGVYSPLEGFMVREDYLSVLEFMRLSNDLPWTIPIILDVDENVKKSVREGDEVAIFFKGKPIAILYVEEIFPWDKNYHTLKVFKTDDLNHPGVRKVFNKKDYLLGGPLIQISDVPEPFEKYRLWPKETRVLFEQKGWKRVAAFQTRNVPHLGHEYVQKAALTFTDGLFVNPLVGWKKPGDFRDEVIIKAYEALIEHYYPKDSVAFSVLRMEMRYAGPREAVHHAIVRKNFGATHFIVGRDHAGVGNYYGPYEAWDIFKNFPDLGITPLFVREAFYCKKCGGMVNEKICPHPEEYRIRISGTKLRKMIMEGKRPPEYMMRPEVAEVVLSFEDPFVH.

This sequence belongs to the sulfate adenylyltransferase family.

The enzyme catalyses sulfate + ATP + H(+) = adenosine 5'-phosphosulfate + diphosphate. It functions in the pathway sulfur metabolism; hydrogen sulfide biosynthesis; sulfite from sulfate: step 1/3. The polypeptide is Sulfate adenylyltransferase (Ignicoccus hospitalis (strain KIN4/I / DSM 18386 / JCM 14125)).